A 412-amino-acid polypeptide reads, in one-letter code: Mitochondrial distribution and morphology protein 12 (412 aa).

Positions 1-410 (MSIDLEWAKL…FPNFHTLVMG (410 aa)) constitute an SMP-LTD domain. Disordered stretches follow at residues 66–96 (EDDEDDSSTSPVKVTEGQLDAHGGEDDDGYE), 108–136 (YTEGGGHGGNGSHLPMHLRHPPLRSSPTD), 166–238 (QGSG…QQEN), and 314–354 (PAGD…KPLP). Over residues 220 to 238 (NQPVFPSQQPQQQQPQQEN) the composition is skewed to low complexity.

The protein belongs to the MDM12 family. In terms of assembly, component of the ER-mitochondria encounter structure (ERMES) or MDM complex, composed of MMM1, MDM10, MDM12 and MDM34. An MMM1 homodimer associates with one molecule of MDM12 on each side in a pairwise head-to-tail manner, and the SMP-LTD domains of MMM1 and MDM12 generate a continuous hydrophobic tunnel for phospholipid trafficking.

It localises to the mitochondrion outer membrane. The protein resides in the endoplasmic reticulum membrane. Functionally, component of the ERMES/MDM complex, which serves as a molecular tether to connect the endoplasmic reticulum (ER) and mitochondria. Components of this complex are involved in the control of mitochondrial shape and protein biogenesis, and function in nonvesicular lipid trafficking between the ER and mitochondria. MDM12 is required for the interaction of the ER-resident membrane protein MMM1 and the outer mitochondrial membrane-resident beta-barrel protein MDM10. The MDM12-MMM1 subcomplex functions in the major beta-barrel assembly pathway that is responsible for biogenesis of all mitochondrial outer membrane beta-barrel proteins, and acts in a late step after the SAM complex. The MDM10-MDM12-MMM1 subcomplex further acts in the TOM40-specific pathway after the action of the MDM12-MMM1 complex. Essential for establishing and maintaining the structure of mitochondria and maintenance of mtDNA nucleoids. This is Mitochondrial distribution and morphology protein 12 from Coprinopsis cinerea (strain Okayama-7 / 130 / ATCC MYA-4618 / FGSC 9003) (Inky cap fungus).